The sequence spans 861 residues: MNNPSTTKAPLADYLAHLPLAEEERERLGESASFSELHARLAGAEGAAADAGGDPALASVRARLQLGTPELDDAEMFGVDAQGRTFLKISPPIRRTKVIPEPWRTNILVRGWRRLTGRSNPPKPKRALPRARWQRVGSLRRFILLLLMLAQTSVATYYMKGILPYQGWAFVDLEELAQQSLLDTVQQVLPYVIQFGILALFAILFCWVSAGFWTALMGFWELLTGRDRYRISGSSAGSEPIAADARTAIVMPICNEDVPRVFAGLRATVESMAATGEMERFDFFVLSDTNDPDIAVAEQQAWLELCRETKGFGKIFYRRRRRRVKRKSGNIDDFCRRWGGDYRYMVVMDADSVMSGDCLAKLVRLMEANPEAGIIQTAPKASGMDTLYARMQQFATRVYGPLFTAGLHFWQLGESHYWGHNAIIRMQPFIDHCALAPLPGKGSFAGAILSHDFVEAALMRRAGWGVWIAYDLDGSYEELPPNLLDELKRDRRWCHGNLMNFRLFLVKGMHPVHRAVFLTGVMSYLSAPLWFFFLVLSTALLAVHQLMEPQYFLEPRQLFPIWPQWHPEKAIALFSTTLTLLFLPKLLSVMLIWAKGAKGFGGVIRVTLSMLLEMFFSVLLAPVRMLFHTRFVLAAFLGWSVQWNSPQRDDDATPWSEAIRRHGMQTLLGIAWTLLVAWLNPRFLWWLSPIVGSLILSIPVSVISSRVKLGLRARDEKLFLIPEEYDTPRELRATDEYTYENRWHALKDGFLKAAVDPLLNALACAMGTARHNRAQAIETVRGERIGKAIDKGPEQLDGATRLALLSDPVALSRLHTRVWEEDRDDWLGRWRKAEADDPHAASVPLAQVVPGDAGLLPAAQS.

6 helical membrane passes run 142-162, 188-208, 516-536, 573-593, 600-620, and 683-703; these read FILLLLMLAQTSVATYYMKGI, VLPYVIQFGILALFAILFCWV, VFLTGVMSYLSAPLWFFFLVL, LFSTTLTLLFLPKLLSVMLIW, FGGVIRVTLSMLLEMFFSVLL, and FLWWLSPIVGSLILSIPVSVI.

The protein belongs to the glycosyltransferase 2 family. OpgH subfamily.

The protein resides in the cell inner membrane. Its pathway is glycan metabolism; osmoregulated periplasmic glucan (OPG) biosynthesis. Functionally, involved in the biosynthesis of osmoregulated periplasmic glucans (OPGs). This chain is Glucans biosynthesis glucosyltransferase H, found in Pseudomonas aeruginosa (strain LESB58).